Here is a 683-residue protein sequence, read N- to C-terminus: DNA ligase (683 aa).

NAD(+) is bound by residues Asp42 to Asp46, Ser91 to Leu92, and Glu122. The N6-AMP-lysine intermediate role is filled by Lys124. Residues Arg145, Glu182, Lys299, and Lys323 each contribute to the NAD(+) site. Zn(2+)-binding residues include Cys417, Cys420, Cys435, and Cys441. One can recognise a BRCT domain in the interval Ala602–Thr683.

It belongs to the NAD-dependent DNA ligase family. LigA subfamily. The cofactor is Mg(2+). It depends on Mn(2+) as a cofactor.

The enzyme catalyses NAD(+) + (deoxyribonucleotide)n-3'-hydroxyl + 5'-phospho-(deoxyribonucleotide)m = (deoxyribonucleotide)n+m + AMP + beta-nicotinamide D-nucleotide.. Functionally, DNA ligase that catalyzes the formation of phosphodiester linkages between 5'-phosphoryl and 3'-hydroxyl groups in double-stranded DNA using NAD as a coenzyme and as the energy source for the reaction. It is essential for DNA replication and repair of damaged DNA. This is DNA ligase from Paraburkholderia phymatum (strain DSM 17167 / CIP 108236 / LMG 21445 / STM815) (Burkholderia phymatum).